A 122-amino-acid chain; its full sequence is Large ribosomal subunit protein uL14 (122 aa).

The protein belongs to the universal ribosomal protein uL14 family. As to quaternary structure, part of the 50S ribosomal subunit. Forms a cluster with proteins L3 and L19. In the 70S ribosome, L14 and L19 interact and together make contacts with the 16S rRNA in bridges B5 and B8.

Binds to 23S rRNA. Forms part of two intersubunit bridges in the 70S ribosome. The polypeptide is Large ribosomal subunit protein uL14 (Leptothrix cholodnii (strain ATCC 51168 / LMG 8142 / SP-6) (Leptothrix discophora (strain SP-6))).